The chain runs to 358 residues: Phosphoserine aminotransferase (358 aa).

L-glutamate is bound at residue Arg-41. Pyridoxal 5'-phosphate contacts are provided by residues 75 to 76 (AS), Trp-100, Thr-148, Asp-167, and Gln-190. Lys-191 is subject to N6-(pyridoxal phosphate)lysine. Pyridoxal 5'-phosphate is bound at residue 233 to 234 (NT).

It belongs to the class-V pyridoxal-phosphate-dependent aminotransferase family. SerC subfamily. As to quaternary structure, homodimer. Pyridoxal 5'-phosphate is required as a cofactor.

The protein localises to the cytoplasm. It catalyses the reaction O-phospho-L-serine + 2-oxoglutarate = 3-phosphooxypyruvate + L-glutamate. The catalysed reaction is 4-(phosphooxy)-L-threonine + 2-oxoglutarate = (R)-3-hydroxy-2-oxo-4-phosphooxybutanoate + L-glutamate. The protein operates within amino-acid biosynthesis; L-serine biosynthesis; L-serine from 3-phospho-D-glycerate: step 2/3. It functions in the pathway cofactor biosynthesis; pyridoxine 5'-phosphate biosynthesis; pyridoxine 5'-phosphate from D-erythrose 4-phosphate: step 3/5. In terms of biological role, catalyzes the reversible conversion of 3-phosphohydroxypyruvate to phosphoserine and of 3-hydroxy-2-oxo-4-phosphonooxybutanoate to phosphohydroxythreonine. In Campylobacter lari (strain RM2100 / D67 / ATCC BAA-1060), this protein is Phosphoserine aminotransferase.